The chain runs to 543 residues: Intermediate filament protein ifb-2 (543 aa).

Polar residues predominate over residues Met1–Arg10. The disordered stretch occupies residues Met1–His27. The segment at Met1–Glu42 is head. The IF rod domain maps to Glu39–Phe388. The coil 1A stretch occupies residues Met43 to Leu74. Residues Arg75–Lys88 are linker 1. Residues Phe89 to Leu223 are coil 1B. Positions Arg224–Asn240 are linker 12. The tract at residues Glu241–Arg387 is coil 2. Residues Phe388–Ser542 are tail. Residues Thr420–Thr538 enclose the LTD domain.

The protein belongs to the intermediate filament family. Expression is restricted to a discrete circumferential subapical layer within the intestinal terminal web (known as the 'endotube'); this layer joins directly to the apical junction complexes that connect adjacent gut cells.

Its subcellular location is the cytoplasm. In terms of biological role, cytoplasmic intermediate filaments provide mechanical strength to cells. Not essential protein. Component of the terminal web (organelle-depleted, intermediate filament-rich layer of cytoplasm that underlies the apical microvilli of polarized epithelial cells) in embryonic through to adult gut cells. Correct localization of filaments requires let-413. This chain is Intermediate filament protein ifb-2 (ifb-2), found in Caenorhabditis elegans.